The chain runs to 191 residues: Putative manganese efflux pump MntP (191 aa).

6 consecutive transmembrane segments (helical) span residues 3-23 (PISI…AAIG), 37-57 (LRAG…GWLL), 65-85 (VEAF…IHMI), 107-129 (WKLA…GLAF), 144-164 (CTLT…SMVG), and 169-189 (IIGG…HLHG).

This sequence belongs to the MntP (TC 9.B.29) family.

The protein localises to the cell inner membrane. In terms of biological role, probably functions as a manganese efflux pump. The polypeptide is Putative manganese efflux pump MntP (Stenotrophomonas maltophilia (strain K279a)).